Reading from the N-terminus, the 309-residue chain is High-affinity zinc uptake system protein AztC (309 aa).

Residues 1–24 (MKDWLFRIATCSIMTFSSLAAAQA) form the signal peptide. His-61 serves as a coordination point for Zn(2+). The tract at residues 117–132 (GGGHYHYIDGKAVFHA) is D-loop. His-138 serves as a coordination point for Zn(2+). A disulfide bridge links Cys-158 with Cys-165. His-204 is a binding site for Zn(2+). The tract at residues 222 to 229 (QGVSTESE) is Z-loop. A Zn(2+)-binding site is contributed by Asp-279.

The protein belongs to the bacterial solute-binding protein 9 family. In terms of assembly, monomer.

Its subcellular location is the periplasm. Part of the ATP-binding cassette (ABC) transport system AztABCD involved in zinc import. Binds zinc with high affinity and specificity and delivers it to the membrane permease for translocation into the cytoplasm. This Paracoccus denitrificans (strain Pd 1222) protein is High-affinity zinc uptake system protein AztC.